The chain runs to 715 residues: ABC transporter F family member 3 (715 aa).

N-acetylthreonine is present on threonine 2. The interval 96 to 118 (VRMNDGMDDGPVKKKKPEPVDGP) is disordered. ABC transporter domains follow at residues 175–436 (IHMD…KNQQ) and 504–713 (ISFS…LLQS). ATP contacts are provided by residues 207–214 (GRNGTGKT) and 537–544 (GPNGIGKS).

It belongs to the ABC transporter superfamily. ABCF family. EF3 (TC 3.A.1.121) subfamily.

The polypeptide is ABC transporter F family member 3 (ABCF3) (Arabidopsis thaliana (Mouse-ear cress)).